The following is a 353-amino-acid chain: Quinolinate synthase (353 aa).

Histidine 47 and serine 68 together coordinate iminosuccinate. Cysteine 113 lines the [4Fe-4S] cluster pocket. Iminosuccinate-binding positions include 139 to 141 (YAN) and serine 156. Cysteine 200 lines the [4Fe-4S] cluster pocket. Iminosuccinate is bound by residues 226–228 (HPE) and threonine 243. Cysteine 297 contributes to the [4Fe-4S] cluster binding site.

The protein belongs to the quinolinate synthase family. Type 1 subfamily. It depends on [4Fe-4S] cluster as a cofactor.

It localises to the cytoplasm. The enzyme catalyses iminosuccinate + dihydroxyacetone phosphate = quinolinate + phosphate + 2 H2O + H(+). Its pathway is cofactor biosynthesis; NAD(+) biosynthesis; quinolinate from iminoaspartate: step 1/1. Its function is as follows. Catalyzes the condensation of iminoaspartate with dihydroxyacetone phosphate to form quinolinate. The chain is Quinolinate synthase from Vibrio vulnificus (strain CMCP6).